The sequence spans 452 residues: Probable 1,4-beta-D-glucan cellobiohydrolase A (452 aa).

The first 17 residues, 1-17 (MHQRALLFSALAVAANA), serve as a signal peptide directing secretion. N-linked (GlcNAc...) asparagine glycosylation is present at Asn81. Catalysis depends on Glu226, which acts as the Nucleophile. Glu231 functions as the Proton donor in the catalytic mechanism. The N-linked (GlcNAc...) asparagine glycan is linked to Asn284. The disordered stretch occupies residues 405–431 (ADPSKPGVARGTCEHGAGDPENVESQH).

The protein belongs to the glycosyl hydrolase 7 (cellulase C) family.

Its subcellular location is the secreted. The enzyme catalyses Hydrolysis of (1-&gt;4)-beta-D-glucosidic linkages in cellulose and cellotetraose, releasing cellobiose from the non-reducing ends of the chains.. Functionally, the biological conversion of cellulose to glucose generally requires three types of hydrolytic enzymes: (1) Endoglucanases which cut internal beta-1,4-glucosidic bonds; (2) Exocellobiohydrolases that cut the disaccharide cellobiose from the non-reducing end of the cellulose polymer chain; (3) Beta-1,4-glucosidases which hydrolyze the cellobiose and other short cello-oligosaccharides to glucose. In Aspergillus fumigatus (strain CBS 144.89 / FGSC A1163 / CEA10) (Neosartorya fumigata), this protein is Probable 1,4-beta-D-glucan cellobiohydrolase A (cbhA).